Consider the following 281-residue polypeptide: Cis-2,3-dihydrobiphenyl-2,3-diol dehydrogenase (281 aa).

An NAD(+)-binding site is contributed by 10–34; that stretch reads ITGGASGLGRALVDRFVAEGARVAV. S142 contributes to the substrate binding site. The active-site Proton acceptor is the Y155.

Belongs to the short-chain dehydrogenases/reductases (SDR) family. In terms of assembly, homotetramer.

It carries out the reaction (2R,3S)-3-phenylcyclohexa-3,5-diene-1,2-diol + NAD(+) = biphenyl-2,3-diol + NADH + H(+). It participates in xenobiotic degradation; biphenyl degradation; 2-hydroxy-2,4-pentadienoate and benzoate from biphenyl: step 2/4. The polypeptide is Cis-2,3-dihydrobiphenyl-2,3-diol dehydrogenase (bphB) (Comamonas testosteroni (Pseudomonas testosteroni)).